Consider the following 302-residue polypeptide: 4-hydroxy-tetrahydrodipicolinate synthase (302 aa).

Thr46 contributes to the pyruvate binding site. The active-site Proton donor/acceptor is Tyr134. Lys162 acts as the Schiff-base intermediate with substrate in catalysis. Residue Ile204 coordinates pyruvate.

Belongs to the DapA family. In terms of assembly, homotetramer; dimer of dimers.

The protein resides in the cytoplasm. The enzyme catalyses L-aspartate 4-semialdehyde + pyruvate = (2S,4S)-4-hydroxy-2,3,4,5-tetrahydrodipicolinate + H2O + H(+). It participates in amino-acid biosynthesis; L-lysine biosynthesis via DAP pathway; (S)-tetrahydrodipicolinate from L-aspartate: step 3/4. Its function is as follows. Catalyzes the condensation of (S)-aspartate-beta-semialdehyde [(S)-ASA] and pyruvate to 4-hydroxy-tetrahydrodipicolinate (HTPA). The protein is 4-hydroxy-tetrahydrodipicolinate synthase of Xanthomonas axonopodis pv. citri (strain 306).